The following is a 304-amino-acid chain: Small ribosomal subunit protein uS3 (304 aa).

The 70-residue stretch at 17-86 folds into the KH type-2 domain; the sequence is IDEFFAEELG…DPQVDVQEVD (70 aa). Residues 216–304 are disordered; sequence LLEGEPEDSE…DEMDEEGDDE (89 aa).

The protein belongs to the universal ribosomal protein uS3 family. In terms of assembly, part of the 30S ribosomal subunit.

Its function is as follows. Binds the lower part of the 30S subunit head. The polypeptide is Small ribosomal subunit protein uS3 (Haloarcula marismortui (strain ATCC 43049 / DSM 3752 / JCM 8966 / VKM B-1809) (Halobacterium marismortui)).